A 749-amino-acid polypeptide reads, in one-letter code: Protein kinase domain-containing protein ppk32 (749 aa).

Residues 21 to 317 (IQKENSVQVG…MFELERSPYF (297 aa)) enclose the Protein kinase domain. 2 disordered regions span residues 598-677 (KKLQ…VTAK) and 706-749 (PLIP…KSLL). Positions 602–651 (SKPSSVVPNRITTDPFSSQTKEATSKPSSISPNKATTNIFTSQASLSSQG) are enriched in polar residues. Serine 632 bears the Phosphoserine mark. Composition is skewed to low complexity over residues 657-670 (SSASSYRSYSQRAS) and 721-735 (NRRVTTPVVNQNTVT).

The protein localises to the cytoplasm. This chain is Protein kinase domain-containing protein ppk32 (ppk32), found in Schizosaccharomyces pombe (strain 972 / ATCC 24843) (Fission yeast).